The primary structure comprises 418 residues: Putative ion-transport protein YfeO (418 aa).

The next 12 helical transmembrane spans lie at 10 to 30 (LLLSLPAVAIGIASSLILIVV), 54 to 74 (DSPLWIIGVLTLTGIAVGLVI), 99 to 119 (ALPGLIVALILGLAGGVSLGP), 120 to 140 (EHPIMTINIALAVAIGARLLP), 149 to 169 (ILASAGTIGALFGTPVAAALI), 186 to 206 (LFAPLMAAAAGALTTGLFFHP), 223 to 243 (ILSGAIVAAIAIAAGMVAVWC), 258 to 278 (VLVLGIGGFILGILGVIGGPV), 300 to 320 (DYFLLAVIKLAALVVAAASGF), 322 to 342 (GGRIFPAVFVGVALGLMLHEH), 343 to 363 (VPAVPAAITVSCAILGIVLVV), and 371 to 391 (LFMAAVVVPNTTLLPLLCIVM).

Belongs to the chloride channel (TC 2.A.49) family.

The protein localises to the cell membrane. The protein is Putative ion-transport protein YfeO of Shigella boydii serotype 4 (strain Sb227).